A 1023-amino-acid chain; its full sequence is 2-oxoglutarate dehydrogenase complex component E1 (1023 aa).

Residues 1-40 constitute a mitochondrion transit peptide; the sequence is MFHLRTCAAKLRPLTASQTVKTFSQNKPAAIRTFQQIRCY. K74 carries the post-translational modification N6-succinyllysine. The residue at position 100 (S100) is a Phosphoserine. Ca(2+)-binding residues include H143, D156, and D158. R312 lines the thiamine diphosphate pocket. The residue at position 401 (K401) is an N6-acetyllysine. Residues D411, N444, and I446 each contribute to the thiamine diphosphate site. Mg(2+) contacts are provided by D411, N444, and I446. Residue K534 forms a Glycyl lysine isopeptide (Lys-Gly) (interchain with G-Cter in ubiquitin) linkage. Residue K564 is modified to N6-succinyllysine. Residue Q676 coordinates thiamine diphosphate. The segment at 933–939 is recognized by alloreactive CD8 cytotoxic T-lymphocytes in association with a class I MHC protein; sequence LSPFPFD. An N6-acetyllysine modification is found at K970.

This sequence belongs to the alpha-ketoglutarate dehydrogenase family. As to quaternary structure, homodimer. The 2-oxoglutarate dehydrogenase complex is composed of OGDH (2-oxoglutarate dehydrogenase; E1), DLST (dihydrolipoamide succinyltransferase; E2), DLD (dihydrolipoamide dehydrogenase; E3) and the assembly factor KGD4. It contains multiple copies of the three enzymatic components (E1, E2 and E3). In the nucleus, the 2-oxoglutarate dehydrogenase complex associates with KAT2A. Interacts with ABHD11; this interaction maintains the functional lipoylation of the 2-oxoglutarate dehydrogenase complex. Requires thiamine diphosphate as cofactor. The cofactor is Mg(2+).

It localises to the mitochondrion. Its subcellular location is the nucleus. The enzyme catalyses N(6)-[(R)-lipoyl]-L-lysyl-[protein] + 2-oxoglutarate + H(+) = N(6)-[(R)-S(8)-succinyldihydrolipoyl]-L-lysyl-[protein] + CO2. With respect to regulation, calcium ions and ADP stimulate, whereas ATP and NADH reduce catalytic activity. In terms of biological role, 2-oxoglutarate dehydrogenase (E1o) component of the 2-oxoglutarate dehydrogenase complex (OGDHC). Participates in the first step, rate limiting for the overall conversion of 2-oxoglutarate to succinyl-CoA and CO(2) catalyzed by the whole OGDHC. Catalyzes the irreversible decarboxylation of 2-oxoglutarate (alpha-ketoglutarate) via the thiamine diphosphate (ThDP) cofactor and subsequent transfer of the decarboxylated acyl intermediate on an oxidized dihydrolipoyl group that is covalently amidated to the E2 enzyme (dihydrolipoyllysine-residue succinyltransferase or DLST). Plays a key role in the Krebs (citric acid) cycle, which is a common pathway for oxidation of fuel molecules, including carbohydrates, fatty acids, and amino acids. Can catalyze the decarboxylation of 2-oxoadipate in vitro, but at a much lower rate than 2-oxoglutarate. Mainly active in the mitochondrion. A fraction of the 2-oxoglutarate dehydrogenase complex also localizes in the nucleus and is required for lysine succinylation of histones: associates with KAT2A on chromatin and provides succinyl-CoA to histone succinyltransferase KAT2A. This chain is 2-oxoglutarate dehydrogenase complex component E1, found in Mus musculus (Mouse).